The following is a 764-amino-acid chain: 5-methyltetrahydropteroyltriglutamate--homocysteine methyltransferase (764 aa).

5-methyltetrahydropteroyltri-L-glutamate is bound by residues 16 to 19 and Lys-112; that span reads RELK. Residues 431 to 433 and Glu-484 each bind L-homocysteine; that span reads IGS. L-methionine contacts are provided by residues 431–433 and Glu-484; that span reads IGS. 5-methyltetrahydropteroyltri-L-glutamate-binding positions include 515-516 and Trp-561; that span reads RC. Asp-599 is an L-homocysteine binding site. Asp-599 is an L-methionine binding site. Position 605 (Glu-605) interacts with 5-methyltetrahydropteroyltri-L-glutamate. The Zn(2+) site is built by His-641, Cys-643, and Glu-665. The active-site Proton donor is the His-694. Residue Cys-726 participates in Zn(2+) binding.

This sequence belongs to the vitamin-B12 independent methionine synthase family. Requires Zn(2+) as cofactor.

The catalysed reaction is 5-methyltetrahydropteroyltri-L-glutamate + L-homocysteine = tetrahydropteroyltri-L-glutamate + L-methionine. It functions in the pathway amino-acid biosynthesis; L-methionine biosynthesis via de novo pathway; L-methionine from L-homocysteine (MetE route): step 1/1. Functionally, catalyzes the transfer of a methyl group from 5-methyltetrahydrofolate to homocysteine resulting in methionine formation. In Paraburkholderia xenovorans (strain LB400), this protein is 5-methyltetrahydropteroyltriglutamate--homocysteine methyltransferase.